Consider the following 479-residue polypeptide: MMSGVQPVAVYALRVPADGALVPAVPDAAAMFRVSMAAIDPDEAPEFDDDSSRRPRATLRIIRAPPGLDEEDSDDDYEDEDDSEDDSEDDEEVNGGPSDKEKARKLKEAAYLKELEDAMSEDDESDEGEEFDLKAAISKLVKGKAPATDDDDEDAESDEGLDLDEMVVCTLDPERNYQQPLDITVAEGERVFFKVTGTHTIYLTGNYVMPIDEPRDDYDEDDDEDEEDYDLSPDEDELDMDELMMGEDDESDDLDGLENPRITEIDTDEEEAPKLVDAKGKKKRGADEAALEAKDDKAKSAANGESKKQQKKLKKNNGEASAVEAKPEQKETKKVQFAKNLEQGPTPSKERKPDEKKPADKAEKTTGTLGVKEVKGVIIDDKKLGKGPAAASGNTVAMRYIGKLENGKVFDSNKKGKPFTFKLGKGEVIKGWDIGVAGMAVGGERRITIPSHLAYGKKGVPGIPGNSKLIFDVKLLEIK.

Disordered stretches follow at residues 39–106, 141–162, and 205–367; these read IDPD…ARKL, VKGK…EGLD, and GNYV…KTTG. Composition is skewed to acidic residues over residues 40 to 49, 68 to 93, 148 to 162, and 214 to 256; these read DPDEAPEFDD, LDEE…DEEV, TDDD…EGLD, and PRDD…DLDG. Basic and acidic residues-rich tracts occupy residues 272–299, 325–334, and 348–364; these read APKL…DKAK, AKPEQKETKK, and SKER…KAEK. A PPIase FKBP-type domain is found at 393–479; that stretch reads GNTVAMRYIG…IFDVKLLEIK (87 aa).

This sequence belongs to the FKBP-type PPIase family. FKBP3/4 subfamily. As to quaternary structure, binds to histones H3 and H4.

It localises to the nucleus. It catalyses the reaction [protein]-peptidylproline (omega=180) = [protein]-peptidylproline (omega=0). Inhibited by both FK506 and rapamycin. Its function is as follows. PPIase that acts as a histone chaperone. Histone proline isomerase that increases the rate of cis-trans isomerization at prolines on the histone H3 N-terminal tail. Proline isomerization influences H3 methylation thereby regulating gene expression. In Emericella nidulans (strain FGSC A4 / ATCC 38163 / CBS 112.46 / NRRL 194 / M139) (Aspergillus nidulans), this protein is FK506-binding protein 4 (fpr4).